We begin with the raw amino-acid sequence, 919 residues long: Calcium-activated chloride channel regulator 4 (919 aa).

A signal peptide spans M1–T21. The tract at residues D45 to K199 is metalloprotease domain. N75 is a glycosylation site (N-linked (GlcNAc...) asparagine). H155 provides a ligand contact to Zn(2+). The active site involves E156. Zn(2+)-binding residues include H159 and D166. Positions I306–L476 constitute a VWFA domain. N340, N504, N542, N588, N628, N811, N832, N837, and N852 each carry an N-linked (GlcNAc...) asparagine glycan. The segment at A870–S893 is disordered. The helical transmembrane segment at V895–L915 threads the bilayer.

The protein belongs to the CLCR family. The translation product is autoproteolytically cleaved by the metalloprotease domain in the endoplasmic reticulum into a N-terminal and a C-terminal products that remain physically associated with each other. The cleavage is necessary for calcium-activated chloride channel (CaCC) activation activity. Primarily expressed in the digestive tract, mainly in colon. Detected in smaller amounts in brain, urogenital organs, testis, and salivary and mammary glands. Highly expressed in the epithelial layer and submucosal gland of the inferior turbinate mucosa. Lower levels in the epithelial layer of nasal polyp.

Its subcellular location is the cell membrane. The protein localises to the apical cell membrane. It localises to the secreted. Functionally, may be involved in mediating calcium-activated chloride conductance. This chain is Calcium-activated chloride channel regulator 4 (CLCA4), found in Homo sapiens (Human).